We begin with the raw amino-acid sequence, 100 residues long: Urease subunit gamma (100 aa).

Belongs to the urease gamma subunit family. In terms of assembly, heterotrimer of UreA (gamma), UreB (beta) and UreC (alpha) subunits. Three heterotrimers associate to form the active enzyme.

It localises to the cytoplasm. It carries out the reaction urea + 2 H2O + H(+) = hydrogencarbonate + 2 NH4(+). It participates in nitrogen metabolism; urea degradation; CO(2) and NH(3) from urea (urease route): step 1/1. This Pseudomonas aeruginosa (strain UCBPP-PA14) protein is Urease subunit gamma.